We begin with the raw amino-acid sequence, 1018 residues long: MEDEEGPEYGKPDFVLLDQVTMEDFMRNLQLRFEKGRIYTYIGEVLVSVNPYQELPLYGPEAIARYQGRELYERPPHLYAVANAAYKAMKHRSRDTCIVISGESGAGKTEASKHIMQYIAAVTNPSQRAEVERVKDVLLKSTCVLEAFGNARTNRNHNSSRFGKYMDINFDFKGDPIGGHIHSYLLEKSRVLKQHVGERNFHAFYQLLRGSEDKQLHELHLERNPAVYNFTHQGAGLNMTVHSALDSDEQSHQAVTEAMRVIGFSPEEVESVHRILAAILHLGNIEFVETEEGGLQKEGLAVAEEALVDHVAELTATPRDLVLRSLLARTVASGGRELIEKGHTAAEASYARDACAKAVYQRLFEWVVNRINSVMEPRGRDPRRDGKDTVIGVLDIYGFEVFPVNSFEQFCINYCNEKLQQLFIQLILKQEQEEYEREGITWQSVEYFNNATIVDLVERPHRGILAVLDEACSSAGTITDRIFLQTLDMHHRHHLHYTSRQLCPTDKTMEFGRDFRIKHYAGDVTYSVEGFIDKNRDFLFQDFKRLLYNSTDPTLRAMWPDGQQDITEVTKRPLTAGTLFKNSMVALVENLASKEPFYVRCIKPNEDKVAGKLDENHCRHQVAYLGLLENVRVRRAGFASRQPYSRFLLRYKMTCEYTWPNHLLGSDKAAVSALLEQHGLQGDVAFGHSKLFIRSPRTLVTLEQSRARLIPIIVLLLQKAWRGTLARWRCRRLRAIYTIMRWFRRHKVRAHLAELQRRFQAARQPPLYGRDLVWPLPPAVLQPFQDTCHALFCRWRARQLVKNIPPSDMPQIKAKVAAMGALQGLRQDWGCRRAWARDYLSSATDNPTASSLFAQRLKTLQDKDGFGAVLFSSHVRKVNRFHKIRNRALLLTDQHLYKLDPDRQYRVMRAVPLEAVTGLSVTSGGDQLVVLHARGQDDLVVCLHRSRPPLDNRVGELVGVLAAHCQGEGRTLEVRVSDCIPLSHRGVRRLISVEPRPEQPEPDFRCARGSFTLLWPSR.

At M1 the chain carries N-acetylmethionine. Positions 9 to 707 constitute a Myosin motor domain; that stretch reads YGKPDFVLLD…TLVTLEQSRA (699 aa). 102 to 109 is an ATP binding site; it reads GESGAGKT. The interval 584-606 is actin-binding; the sequence is MVALVENLASKEPFYVRCIKPNE. In terms of domain architecture, IQ spans 710–739; the sequence is IPIIVLLLQKAWRGTLARWRCRRLRAIYTI. The region spanning 824–1017 is the TH1 domain; that stretch reads GLRQDWGCRR…RGSFTLLWPS (194 aa).

The protein belongs to the TRAFAC class myosin-kinesin ATPase superfamily. Myosin family. As to quaternary structure, interacts with calmodulin; via its IQ motifs. In terms of tissue distribution, specifically expressed in hematopoietic cells.

It is found in the cell membrane. The protein resides in the cell projection. The protein localises to the phagocytic cup. Unconventional myosin required during immune response for detection of rare antigen-presenting cells by regulating T-cell migration. Unconventional myosins are actin-based motor molecules with ATPase activity and serve in intracellular movements. Acts as a regulator of T-cell migration by generating membrane tension, enforcing cell-intrinsic meandering search, thereby enhancing detection of rare antigens during lymph-node surveillance, enabling pathogen eradication. Also required in B-cells, where it regulates different membrane/cytoskeleton-dependent processes. Involved in Fc-gamma receptor (Fc-gamma-R) phagocytosis. Its function is as follows. Constitutes the minor histocompatibility antigen HA-2. More generally, minor histocompatibility antigens (mHags) refer to immunogenic peptide which, when complexed with MHC, can generate an immune response after recognition by specific T-cells. The peptides are derived from polymorphic intracellular proteins, which are cleaved by normal pathways of antigen processing. The binding of these peptides to MHC class I or class II molecules and their expression on the cell surface can stimulate T-cell responses and thereby trigger graft rejection or graft-versus-host disease (GVHD) after hematopoietic stem cell transplantation from HLA-identical sibling donor. GVHD is a frequent complication after bone marrow transplantation (BMT), due to mismatch of minor histocompatibility antigen in HLA-matched sibling marrow transplants. HA-2 is restricted to MHC class I HLA-A*0201. This chain is Unconventional myosin-Ig (MYO1G), found in Homo sapiens (Human).